The chain runs to 334 residues: Phospho-N-acetylmuramoyl-pentapeptide-transferase (334 aa).

Helical transmembrane passes span 11 to 31 (GAGLTALAGALALGPVVIPLM), 55 to 75 (PTMGGVIFIIPAILATLIFAP), 84 to 104 (LIIALVLTVGHGLVGFADDYI), 124 to 144 (VGLAAVLGYGAVEVLGLGTAV), 158 to 178 (PLYYLLVLIMVWGTASAVNFA), 184 to 204 (LLGGLSVITFSFYGLVVALAL), 205 to 225 (GQTDMAVLGTALVGGVLGFLH), 233 to 253 (IFMGDVGSFALGGALAALAVL), 258 to 278 (FLLVIVGAVYVIEVISVILQV), and 311 to 331 (LFWGAGLLFTLLGWLVLPGML).

The protein belongs to the glycosyltransferase 4 family. MraY subfamily. It depends on Mg(2+) as a cofactor.

It localises to the cell membrane. It catalyses the reaction UDP-N-acetyl-alpha-D-muramoyl-L-alanyl-gamma-D-glutamyl-meso-2,6-diaminopimeloyl-D-alanyl-D-alanine + di-trans,octa-cis-undecaprenyl phosphate = di-trans,octa-cis-undecaprenyl diphospho-N-acetyl-alpha-D-muramoyl-L-alanyl-D-glutamyl-meso-2,6-diaminopimeloyl-D-alanyl-D-alanine + UMP. It functions in the pathway cell wall biogenesis; peptidoglycan biosynthesis. In terms of biological role, catalyzes the initial step of the lipid cycle reactions in the biosynthesis of the cell wall peptidoglycan: transfers peptidoglycan precursor phospho-MurNAc-pentapeptide from UDP-MurNAc-pentapeptide onto the lipid carrier undecaprenyl phosphate, yielding undecaprenyl-pyrophosphoryl-MurNAc-pentapeptide, known as lipid I. This chain is Phospho-N-acetylmuramoyl-pentapeptide-transferase, found in Symbiobacterium thermophilum (strain DSM 24528 / JCM 14929 / IAM 14863 / T).